A 468-amino-acid chain; its full sequence is Chitoporin (468 aa).

An N-terminal signal peptide occupies residues 1-32; it reads MRTFSGKRSTLALAIAGVTAMSGFMAMPEARA.

It belongs to the outer membrane porin (Opr) (TC 1.B.25) family.

The protein localises to the cell outer membrane. In terms of biological role, involved in the uptake of chitosugars. The chain is Chitoporin (chiP) from Escherichia coli (strain K12).